We begin with the raw amino-acid sequence, 336 residues long: Isopentenyl-diphosphate delta-isomerase (336 aa).

5-6 (RK) provides a ligand contact to substrate. FMN is bound by residues 60 to 62 (AMT), serine 90, and asparagine 117. Residue glutamine 147 coordinates substrate. Glutamate 148 serves as a coordination point for Mg(2+). FMN contacts are provided by residues lysine 179, serine 204, threonine 209, 253 to 255 (GVR), and 274 to 275 (SR).

The protein belongs to the IPP isomerase type 2 family. Homooctamer. Dimer of tetramers. It depends on FMN as a cofactor. NADPH serves as cofactor. Mg(2+) is required as a cofactor.

Its subcellular location is the cytoplasm. It carries out the reaction isopentenyl diphosphate = dimethylallyl diphosphate. Functionally, involved in the biosynthesis of isoprenoids. Catalyzes the 1,3-allylic rearrangement of the homoallylic substrate isopentenyl (IPP) to its allylic isomer, dimethylallyl diphosphate (DMAPP). In Streptococcus pneumoniae (strain 70585), this protein is Isopentenyl-diphosphate delta-isomerase.